The sequence spans 881 residues: Probable alpha/beta-glucosidase agdC (881 aa).

Residues 1-14 (MLRSLLLLAPLVGA) form the signal peptide. N171, N293, and N373 each carry an N-linked (GlcNAc...) asparagine glycan. D422 functions as the Nucleophile in the catalytic mechanism. E425 is a catalytic residue. The segment at 440–485 (YARDNDLPPAAPPVRPSNPRPLPGFPGDFQPSSSSKRSTKGSKVGL) is disordered. Over residues 448–463 (PAAPPVRPSNPRPLPG) the composition is skewed to pro residues. N-linked (GlcNAc...) asparagine glycosylation is present at N506. Catalysis depends on D571, which acts as the Proton donor. N-linked (GlcNAc...) asparagine glycans are attached at residues N572, N608, and N742.

Belongs to the glycosyl hydrolase 31 family.

It localises to the secreted. It catalyses the reaction Hydrolysis of terminal, non-reducing (1-&gt;4)-linked alpha-D-glucose residues with release of alpha-D-glucose.. The catalysed reaction is Hydrolysis of terminal, non-reducing beta-D-glucosyl residues with release of beta-D-glucose.. Glucosidase involved in the degradation of cellulosic biomass. Has both alpha- and beta-glucosidase activity. The polypeptide is Probable alpha/beta-glucosidase agdC (agdC) (Aspergillus fumigatus (strain CBS 144.89 / FGSC A1163 / CEA10) (Neosartorya fumigata)).